Consider the following 217-residue polypeptide: Urease accessory protein UreG (217 aa).

Residues methionine 1 to proline 18 show a composition bias toward basic residues. A disordered region spans residues methionine 1–valine 24. Glycine 26–threonine 33 is a GTP binding site.

Belongs to the SIMIBI class G3E GTPase family. UreG subfamily. Homodimer. UreD, UreF and UreG form a complex that acts as a GTP-hydrolysis-dependent molecular chaperone, activating the urease apoprotein by helping to assemble the nickel containing metallocenter of UreC. The UreE protein probably delivers the nickel.

The protein resides in the cytoplasm. Its function is as follows. Facilitates the functional incorporation of the urease nickel metallocenter. This process requires GTP hydrolysis, probably effectuated by UreG. This chain is Urease accessory protein UreG, found in Paraburkholderia xenovorans (strain LB400).